The following is an 877-amino-acid chain: Probable linoleate 9S-lipoxygenase 4 (877 aa).

One can recognise a PLAT domain in the interval 38–165; it reads GDFHASLLDG…NYQYERVFFA (128 aa). The Lipoxygenase domain maps to 168 to 877; the sequence is TYLPSKMPAP…AMGIPNSISI (710 aa). Residues 229 to 252 are disordered; it reads GSQELPYPRRGRTGRAPTKTDPNT. Fe cation is bound by residues histidine 528, histidine 533, histidine 719, asparagine 723, and isoleucine 877.

This sequence belongs to the lipoxygenase family. Requires Fe cation as cofactor.

It catalyses the reaction (9Z,12Z)-octadecadienoate + O2 = (9S)-hydroperoxy-(10E,12Z)-octadecadienoate. Its pathway is lipid metabolism; oxylipin biosynthesis. In terms of biological role, plant lipoxygenase may be involved in a number of diverse aspects of plant physiology including growth and development, pest resistance, and senescence or responses to wounding. Catalyzes the hydroperoxidation of lipids containing a cis,cis-1,4-pentadiene structure. The sequence is that of Probable linoleate 9S-lipoxygenase 4 from Oryza sativa subsp. japonica (Rice).